Consider the following 801-residue polypeptide: U-box domain-containing protein 34 (801 aa).

Residues 205 to 309 (RSPTLPDPRQ…PETSRKSKKV (105 aa)) form a disordered region. Residues 236 to 254 (LTCNKPKTPQSSKASSATT) are compositionally biased toward polar residues. Residues 289-309 (VSEHRDSDRSPPETSRKSKKV) show a composition bias toward basic and acidic residues. The stretch at 301-395 (ETSRKSKKVE…ETAKALLARE (95 aa)) forms a coiled coil. One can recognise a Protein kinase domain in the interval 442 to 705 (FSPEKVIGEG…DLKSEVIPVL (264 aa)). Residues 448 to 456 (IGEGGYGKV) and Lys-469 contribute to the ATP site. Residue Asp-564 is the Proton acceptor of the active site. The region spanning 724–797 (RAPSHYFCPI…RDWKSRVRFS (74 aa)) is the U-box domain.

It belongs to the protein kinase superfamily. Ser/Thr protein kinase family.

The catalysed reaction is L-seryl-[protein] + ATP = O-phospho-L-seryl-[protein] + ADP + H(+). It catalyses the reaction L-threonyl-[protein] + ATP = O-phospho-L-threonyl-[protein] + ADP + H(+). It carries out the reaction S-ubiquitinyl-[E2 ubiquitin-conjugating enzyme]-L-cysteine + [acceptor protein]-L-lysine = [E2 ubiquitin-conjugating enzyme]-L-cysteine + N(6)-ubiquitinyl-[acceptor protein]-L-lysine.. It functions in the pathway protein modification; protein ubiquitination. Its function is as follows. Functions as an E3 ubiquitin ligase. The protein is U-box domain-containing protein 34 (PUB34) of Arabidopsis thaliana (Mouse-ear cress).